The following is a 162-amino-acid chain: MSQLTHINAAGEAHMVDVSGKAETVREARAEAYVEMQAATLAMIIDGSHHKGDVFATARIAGIQAAKRTWELIPLCHPLMLSKVEVNLQAQPEHNRVRIESLCRLTGKTGVEMEALTAASVAALTIYDMCKAVQKDMVIGPLRLLAKSGGKSGDFKVDERHD.

Substrate contacts are provided by residues 75-77 (LCH) and 113-114 (ME). The active site involves D128.

The protein belongs to the MoaC family. Homohexamer; trimer of dimers.

The catalysed reaction is (8S)-3',8-cyclo-7,8-dihydroguanosine 5'-triphosphate = cyclic pyranopterin phosphate + diphosphate. Its pathway is cofactor biosynthesis; molybdopterin biosynthesis. Functionally, catalyzes the conversion of (8S)-3',8-cyclo-7,8-dihydroguanosine 5'-triphosphate to cyclic pyranopterin monophosphate (cPMP). This chain is Cyclic pyranopterin monophosphate synthase, found in Klebsiella pneumoniae (strain 342).